A 514-amino-acid chain; its full sequence is 2,3-bisphosphoglycerate-independent phosphoglycerate mutase (514 aa).

Mn(2+) is bound by residues Asp-14 and Ser-64. Ser-64 serves as the catalytic Phosphoserine intermediate. Residues His-125, 155 to 156 (RD), Arg-187, Arg-193, 263 to 266 (RADR), and Lys-336 contribute to the substrate site. Positions 403, 407, 444, 445, and 463 each coordinate Mn(2+).

This sequence belongs to the BPG-independent phosphoglycerate mutase family. Monomer. The cofactor is Mn(2+).

It catalyses the reaction (2R)-2-phosphoglycerate = (2R)-3-phosphoglycerate. The protein operates within carbohydrate degradation; glycolysis; pyruvate from D-glyceraldehyde 3-phosphate: step 3/5. In terms of biological role, catalyzes the interconversion of 2-phosphoglycerate and 3-phosphoglycerate. This is 2,3-bisphosphoglycerate-independent phosphoglycerate mutase from Shewanella sp. (strain ANA-3).